The primary structure comprises 216 residues: Probable transaldolase (216 aa).

The Schiff-base intermediate with substrate role is filled by Lys-84.

The protein belongs to the transaldolase family. Type 3B subfamily.

Its subcellular location is the cytoplasm. It carries out the reaction D-sedoheptulose 7-phosphate + D-glyceraldehyde 3-phosphate = D-erythrose 4-phosphate + beta-D-fructose 6-phosphate. It functions in the pathway carbohydrate degradation; pentose phosphate pathway; D-glyceraldehyde 3-phosphate and beta-D-fructose 6-phosphate from D-ribose 5-phosphate and D-xylulose 5-phosphate (non-oxidative stage): step 2/3. In terms of biological role, transaldolase is important for the balance of metabolites in the pentose-phosphate pathway. This chain is Probable transaldolase, found in Lysinibacillus sphaericus (strain C3-41).